A 113-amino-acid polypeptide reads, in one-letter code: Endoribonuclease SymE (113 aa).

The SpoVT-AbrB domain occupies Ser29 to Pro74.

It belongs to the SymE family.

It is found in the cytoplasm. Functionally, involved in the degradation and recycling of damaged RNA. It is itself a target for degradation by the ATP-dependent protease Lon. The chain is Endoribonuclease SymE from Escherichia coli (strain 55989 / EAEC).